A 244-amino-acid polypeptide reads, in one-letter code: RNA transcription, translation and transport factor protein (244 aa).

N6-acetyllysine occurs at positions 20, 62, and 98.

Belongs to the RTRAF family. Homodimer. Interacts with FAM98A (via N- and C-terminus). Interacts with NIN; which may prevent phosphorylation of NIN. Interacts with POLR2A. Component of a tRNA-splicing ligase complex.

The protein localises to the nucleus. Its subcellular location is the cytoplasm. The protein resides in the cytosol. It is found in the perinuclear region. It localises to the cytoskeleton. The protein localises to the microtubule organizing center. Its subcellular location is the centrosome. Its function is as follows. RNA-binding protein involved in modulation of mRNA transcription by Polymerase II. Component of the tRNA-splicing ligase complex and is required for tRNA ligation. May be required for RNA transport. This chain is RNA transcription, translation and transport factor protein, found in Mus musculus (Mouse).